A 598-amino-acid chain; its full sequence is MPCVQAQYGSSPQGASPASQSYSYHSSGEYSSDFLTPEFVKFSMDLTNTEITATTSLPSFSTFMDNYSTGYDVKPPCLYQMPLSGQQSSIKVEDIQMHNYQQHSHLPPQSEEMMPHSGSVYYKPSSPPTPTTPGFQVQHSPMWDDPGSLHNFHQNYVATTHMIEQRKTPVSRLSLFSFKQSPPGTPVSSCQMRFDGPLHVPMNPEPAGSHHVVDGQTFAVPNPIRKPASMGFPGLQIGHASQLLDTQVPSPPSRGSPSNEGLCAVCGDNAACQHYGVRTCEGCKGFFKRTVQKNAKYVCLANKNCPVDKRRRNRCQYCRFQKCLAVGMVKEVVRTDSLKGRRGRLPSKPKSPQEPSPPSPPVSLISALVRAHVDSNPAMTSLDYSRFQANPDYQMSGDDTQHIQQFYDLLTGSMEIIRGWAEKIPGFTDLPKADQDLLFESAFLELFVLRLAYRSNPVEGKLIFCNGVVLHRLQCVRGFGEWIDSIVEFSSNLQNMNIDISAFSCIAALAMVTERHGLKEPKRVEELQNKIVNCLKDHVTFNNGGLNRPNYLSKLLGKLPELRTLCTQGLQRIFYLKLEDLVPPPAIIDKLFLDTLPF.

The disordered stretch occupies residues 1 to 22 (MPCVQAQYGSSPQGASPASQSY). Residues 8–22 (YGSSPQGASPASQSY) are compositionally biased toward low complexity. Positions 260–335 (EGLCAVCGDN…VGMVKEVVRT (76 aa)) form a DNA-binding region, nuclear receptor. NR C4-type zinc fingers lie at residues 263-283 (CAVC…CEGC) and 299-318 (CLAN…CQYC). A Bipartite nuclear localization signal (NLS1) motif is present at residues 287-314 (FKRTVQKNAKYVCLANKNCPVDKRRRNR). Residues 337-361 (SLKGRRGRLPSKPKSPQEPSPPSPP) are disordered. The Nuclear localization signal (NLS1) motif lies at 338–350 (LKGRRGRLPSKPK). Over residues 352–361 (PQEPSPPSPP) the composition is skewed to pro residues. Residues 360 to 595 (PPVSLISALV…AIIDKLFLDT (236 aa)) form the NR LBD domain. The short motif at 443–452 (FLELFVLRLA) is the nuclear export sequence (NES1) element. A nuclear export sequence (NES2) motif is present at residues 568–577 (QGLQRIFYLK).

It belongs to the nuclear hormone receptor family. NR4 subfamily. As to quaternary structure, interacts with SFPQ, NCOR2, SIN3A and HADC1. The interaction with NCOR2 increases in the absence of PITX3. Interacts with PER2.

Its subcellular location is the cytoplasm. The protein resides in the nucleus. Transcriptional regulator which is important for the differentiation and maintenance of meso-diencephalic dopaminergic (mdDA) neurons during development. It is crucial for expression of a set of genes such as SLC6A3, SLC18A2, TH and DRD2 which are essential for development of mdDA neurons. The polypeptide is Nuclear receptor subfamily 4 group A member 2 (NR4A2) (Bos taurus (Bovine)).